The primary structure comprises 147 residues: CRISP-1 (147 aa).

The protein belongs to the CRISP family. As to expression, expressed by the venom gland.

Its subcellular location is the secreted. This Phoneutria keyserlingi (Brazilian wandering spider) protein is CRISP-1.